The sequence spans 3470 residues: Dynein axonemal heavy chain 5 (3470 aa).

The segment at 1 to 1938 is stem; that stretch reads MFRIGRRQLW…MIHITDVAFT (1938 aa). Positions 899-918 are disordered; sequence EKVRHENASPNGDTSGGGEG. 4 AAA regions span residues 1939–2161, 2221–2440, 2547–2800, and 2913–3167; these read YQNE…VLRT, TAIS…IQNL, VYPP…IWQG, and LYNE…FRRS. ATP-binding positions include 1977–1984 and 2259–2266; these read GPAGTGKT and GPSGSGKT. Coiled coils occupy residues 3207–3241 and 3434–3468; these read LKEA…VLKE and HALA…AMTE.

The protein belongs to the dynein heavy chain family. Interacts with DNAL1. Consists of at least two heavy chains and a number of intermediate and light chains.

The protein resides in the cytoplasm. Its subcellular location is the cytoskeleton. It localises to the cilium axoneme. In terms of biological role, force generating protein of respiratory cilia. Produces force towards the minus ends of microtubules. Dynein has ATPase activity; the force-producing power stroke is thought to occur on release of ADP. Required for structural and functional integrity of the cilia of ependymal cells lining the brain ventricles. In Rattus norvegicus (Rat), this protein is Dynein axonemal heavy chain 5.